Here is a 329-residue protein sequence, read N- to C-terminus: uncharacterized protein (329 aa).

The segment at Met-1–Ser-20 is disordered.

This is an uncharacterized protein from Mycobacterium tuberculosis (strain CDC 1551 / Oshkosh).